A 553-amino-acid polypeptide reads, in one-letter code: Dihydroxy-acid dehydratase (553 aa).

Asp-78 lines the Mg(2+) pocket. Cys-119 lines the [2Fe-2S] cluster pocket. Mg(2+) contacts are provided by Asp-120 and Lys-121. Lys-121 carries the N6-carboxylysine modification. Cys-193 contacts [2Fe-2S] cluster. A Mg(2+)-binding site is contributed by Glu-441. Ser-467 acts as the Proton acceptor in catalysis.

Belongs to the IlvD/Edd family. Homodimer. It depends on [2Fe-2S] cluster as a cofactor. Requires Mg(2+) as cofactor.

It catalyses the reaction (2R)-2,3-dihydroxy-3-methylbutanoate = 3-methyl-2-oxobutanoate + H2O. The enzyme catalyses (2R,3R)-2,3-dihydroxy-3-methylpentanoate = (S)-3-methyl-2-oxopentanoate + H2O. The protein operates within amino-acid biosynthesis; L-isoleucine biosynthesis; L-isoleucine from 2-oxobutanoate: step 3/4. Its pathway is amino-acid biosynthesis; L-valine biosynthesis; L-valine from pyruvate: step 3/4. Functionally, functions in the biosynthesis of branched-chain amino acids. Catalyzes the dehydration of (2R,3R)-2,3-dihydroxy-3-methylpentanoate (2,3-dihydroxy-3-methylvalerate) into 2-oxo-3-methylpentanoate (2-oxo-3-methylvalerate) and of (2R)-2,3-dihydroxy-3-methylbutanoate (2,3-dihydroxyisovalerate) into 2-oxo-3-methylbutanoate (2-oxoisovalerate), the penultimate precursor to L-isoleucine and L-valine, respectively. This Geobacter sulfurreducens (strain ATCC 51573 / DSM 12127 / PCA) protein is Dihydroxy-acid dehydratase.